The sequence spans 612 residues: Methionine--tRNA ligase (612 aa).

Positions 12 to 22 (PYANGPRHIGH) match the 'HIGH' region motif. Residues cysteine 144, cysteine 147, cysteine 157, and cysteine 160 each coordinate Zn(2+). Residues 348–352 (KFSSS) carry the 'KMSKS' region motif. Residue serine 351 coordinates ATP.

This sequence belongs to the class-I aminoacyl-tRNA synthetase family. MetG type 1 subfamily. In terms of assembly, monomer. Zn(2+) is required as a cofactor.

The protein resides in the cytoplasm. The catalysed reaction is tRNA(Met) + L-methionine + ATP = L-methionyl-tRNA(Met) + AMP + diphosphate. Functionally, is required not only for elongation of protein synthesis but also for the initiation of all mRNA translation through initiator tRNA(fMet) aminoacylation. The chain is Methionine--tRNA ligase from Corynebacterium kroppenstedtii (strain DSM 44385 / JCM 11950 / CIP 105744 / CCUG 35717).